Here is a 450-residue protein sequence, read N- to C-terminus: Exodeoxyribonuclease 7 large subunit (450 aa).

This sequence belongs to the XseA family. Heterooligomer composed of large and small subunits.

The protein localises to the cytoplasm. The enzyme catalyses Exonucleolytic cleavage in either 5'- to 3'- or 3'- to 5'-direction to yield nucleoside 5'-phosphates.. Its function is as follows. Bidirectionally degrades single-stranded DNA into large acid-insoluble oligonucleotides, which are then degraded further into small acid-soluble oligonucleotides. The sequence is that of Exodeoxyribonuclease 7 large subunit from Listeria monocytogenes serovar 1/2a (strain ATCC BAA-679 / EGD-e).